The following is a 141-amino-acid chain: MQLTSFTDYGLRALTYMASLPEGQMTSISQVTEVYGVSRNHMVKIINQLSRVGLVTAVRGKNGGIRLGKPADQIRIGDVVRQLEPLSLVNCSSDFCHITPACRLKQVLNQAVQSFLNELDNYTLADMVQDNTPLYKLLFVE.

One can recognise an HTH rrf2-type domain in the interval 2-129 (QLTSFTDYGL…DNYTLADMVQ (128 aa)). Residues 28 to 51 (ISQVTEVYGVSRNHMVKIINQLSR) constitute a DNA-binding region (H-T-H motif). Residues C91, C96, and C102 each contribute to the [2Fe-2S] cluster site.

[2Fe-2S] cluster serves as cofactor.

In terms of biological role, nitric oxide-sensitive repressor of genes involved in protecting the cell against nitrosative stress. May require iron for activity. The polypeptide is HTH-type transcriptional repressor NsrR (Yersinia enterocolitica serotype O:8 / biotype 1B (strain NCTC 13174 / 8081)).